Reading from the N-terminus, the 393-residue chain is NAD(P)H-quinone oxidoreductase subunit H, chloroplastic (393 aa).

The protein belongs to the complex I 49 kDa subunit family. In terms of assembly, NDH is composed of at least 16 different subunits, 5 of which are encoded in the nucleus.

The protein resides in the plastid. The protein localises to the chloroplast thylakoid membrane. It catalyses the reaction a plastoquinone + NADH + (n+1) H(+)(in) = a plastoquinol + NAD(+) + n H(+)(out). The catalysed reaction is a plastoquinone + NADPH + (n+1) H(+)(in) = a plastoquinol + NADP(+) + n H(+)(out). Functionally, NDH shuttles electrons from NAD(P)H:plastoquinone, via FMN and iron-sulfur (Fe-S) centers, to quinones in the photosynthetic chain and possibly in a chloroplast respiratory chain. The immediate electron acceptor for the enzyme in this species is believed to be plastoquinone. Couples the redox reaction to proton translocation, and thus conserves the redox energy in a proton gradient. In Oenothera argillicola (Appalachian evening primrose), this protein is NAD(P)H-quinone oxidoreductase subunit H, chloroplastic.